A 187-amino-acid polypeptide reads, in one-letter code: Protein GrpE (187 aa).

The disordered stretch occupies residues 1–38; it reads MSEEKQTVEQNETEEQEIIEEQAAADEQQEETNESELL. Over residues 11–34 the composition is skewed to acidic residues; sequence NETEEQEIIEEQAAADEQQEETNE.

Belongs to the GrpE family. In terms of assembly, homodimer.

It localises to the cytoplasm. Its function is as follows. Participates actively in the response to hyperosmotic and heat shock by preventing the aggregation of stress-denatured proteins, in association with DnaK and GrpE. It is the nucleotide exchange factor for DnaK and may function as a thermosensor. Unfolded proteins bind initially to DnaJ; upon interaction with the DnaJ-bound protein, DnaK hydrolyzes its bound ATP, resulting in the formation of a stable complex. GrpE releases ADP from DnaK; ATP binding to DnaK triggers the release of the substrate protein, thus completing the reaction cycle. Several rounds of ATP-dependent interactions between DnaJ, DnaK and GrpE are required for fully efficient folding. The chain is Protein GrpE from Bacillus subtilis (strain 168).